We begin with the raw amino-acid sequence, 195 residues long: Morphogenetic protein (195 aa).

Assembly factor active in membrane morphogenesis. This Pseudomonas phage phi6 (Bacteriophage phi-6) protein is Morphogenetic protein (P12).